The chain runs to 471 residues: Glutamate--tRNA ligase 1 (471 aa).

Residues 15–25 (PSPTGYLHIGG) carry the 'HIGH' region motif. The short motif at 243–247 (KLSKR) is the 'KMSKS' region element. Residue Lys-246 coordinates ATP.

This sequence belongs to the class-I aminoacyl-tRNA synthetase family. Glutamate--tRNA ligase type 1 subfamily. Monomer.

The protein resides in the cytoplasm. It carries out the reaction tRNA(Glu) + L-glutamate + ATP = L-glutamyl-tRNA(Glu) + AMP + diphosphate. In terms of biological role, catalyzes the attachment of glutamate to tRNA(Glu) in a two-step reaction: glutamate is first activated by ATP to form Glu-AMP and then transferred to the acceptor end of tRNA(Glu). This is Glutamate--tRNA ligase 1 from Dinoroseobacter shibae (strain DSM 16493 / NCIMB 14021 / DFL 12).